The primary structure comprises 79 residues: Cell division topological specificity factor (79 aa).

This sequence belongs to the MinE family.

Its function is as follows. Prevents the cell division inhibition by proteins MinC and MinD at internal division sites while permitting inhibition at polar sites. This ensures cell division at the proper site by restricting the formation of a division septum at the midpoint of the long axis of the cell. This is Cell division topological specificity factor from Nitratiruptor sp. (strain SB155-2).